Reading from the N-terminus, the 429-residue chain is Serine--tRNA ligase (429 aa).

Residue 235–237 (TAE) participates in L-serine binding. 266 to 268 (RSE) is a binding site for ATP. Position 289 (Glu-289) interacts with L-serine. Position 353-356 (353-356 (EISS)) interacts with ATP. Ser-389 lines the L-serine pocket.

It belongs to the class-II aminoacyl-tRNA synthetase family. Type-1 seryl-tRNA synthetase subfamily. Homodimer. The tRNA molecule binds across the dimer.

Its subcellular location is the cytoplasm. It catalyses the reaction tRNA(Ser) + L-serine + ATP = L-seryl-tRNA(Ser) + AMP + diphosphate + H(+). It carries out the reaction tRNA(Sec) + L-serine + ATP = L-seryl-tRNA(Sec) + AMP + diphosphate + H(+). It functions in the pathway aminoacyl-tRNA biosynthesis; selenocysteinyl-tRNA(Sec) biosynthesis; L-seryl-tRNA(Sec) from L-serine and tRNA(Sec): step 1/1. Functionally, catalyzes the attachment of serine to tRNA(Ser). Is also able to aminoacylate tRNA(Sec) with serine, to form the misacylated tRNA L-seryl-tRNA(Sec), which will be further converted into selenocysteinyl-tRNA(Sec). This chain is Serine--tRNA ligase, found in Haemophilus influenzae (strain PittEE).